Reading from the N-terminus, the 637-residue chain is Probable potassium transport system protein Kup (637 aa).

The next 12 membrane-spanning stretches (helical) occupy residues 24 to 44, 64 to 84, 113 to 133, 151 to 171, 182 to 202, 225 to 245, 261 to 281, 290 to 310, 351 to 371, 381 to 401, 409 to 429, and 433 to 453; these read LAIA…LYAL, VISL…LLFV, AGAL…DAVI, PHLS…LFWI, LFGP…VYHI, LLQA…AEAL, AYGL…ALLI, PFFL…STVA, IYVP…VIGF, YGIA…VVMV, LLVG…FGAN, and VAQG…LLMT.

The protein belongs to the HAK/KUP transporter (TC 2.A.72) family.

It localises to the cell inner membrane. The catalysed reaction is K(+)(in) + H(+)(in) = K(+)(out) + H(+)(out). Its function is as follows. Transport of potassium into the cell. Likely operates as a K(+):H(+) symporter. The polypeptide is Probable potassium transport system protein Kup (Burkholderia ambifaria (strain ATCC BAA-244 / DSM 16087 / CCUG 44356 / LMG 19182 / AMMD) (Burkholderia cepacia (strain AMMD))).